The following is a 142-amino-acid chain: Glia maturation factor beta (142 aa).

S2 carries the N-acetylserine modification. Residues 4 to 139 form the ADF-H domain; the sequence is SLVVCDVAED…TEEWLREKLG (136 aa).

This sequence belongs to the actin-binding proteins ADF family. GMF subfamily. In terms of processing, phosphorylated; stimulated by phorbol ester.

In terms of biological role, this protein causes differentiation of brain cells, stimulation of neural regeneration, and inhibition of proliferation of tumor cells. The polypeptide is Glia maturation factor beta (GMFB) (Homo sapiens (Human)).